Consider the following 568-residue polypeptide: K(+) efflux antiporter 5 (568 aa).

The first 20 residues, 1-20, serve as a signal peptide directing secretion; the sequence is MARFAVIGLTFLLLLGTSLS. Positions 59–78 are disordered; that stretch reads EFSENDSPEGSDGASFNSSV. A run of 12 helical transmembrane segments spans residues 154-174, 178-198, 201-221, 230-250, 264-284, 298-318, 334-354, 389-409, 422-442, 447-467, 476-496, and 510-530; these read LISDLVVIIVFAAIGGIVFSC, PVIVGYLLAGSIIGPGGLKFI, MVQVETVAQFGVVFLLFALGL, VVGPVAVLGGLLQIVLLMFLC, GIFVGAFLSMSSTAVVVKFLV, IGILIFQDCVVGLLFALLPVL, LLLILSIYLTVASLLTWSFVP, LGLSLELGSFVAGVMLSTTEF, NLFAALFLSSIGMLINVHFLW, ILLASVILVIVIKTAIAAVVV, ISFHVGVLLAQIGEFAFVLLS, and LLLLGTTALSLVTTPLLFKLI.

Belongs to the monovalent cation:proton antiporter 2 (CPA2) transporter (TC 2.A.37) family. KEA (TC 2.A.37.1) subfamily. Expressed in roots, stems, leaves, flowers and silique.

Its subcellular location is the golgi apparatus membrane. It localises to the golgi apparatus. The protein resides in the trans-Golgi network membrane. It is found in the prevacuolar compartment membrane. The protein localises to the endomembrane system. It catalyses the reaction K(+)(in) + H(+)(out) = K(+)(out) + H(+)(in). Its function is as follows. Electroneutral K(+)/H(+) efflux antiporter involved in K(+) homeostasis and osmotic adjustment. Together with KEA4 and KEA6, promotes growth and development, and facilitates endosomal pH and ions homeostasis, as well as salt tolerance (e.g. K(+), NaCl and LiCl), probably by supporting cell wall biosynthesis during rapid etiolated seedling growth. The polypeptide is K(+) efflux antiporter 5 (Arabidopsis thaliana (Mouse-ear cress)).